The primary structure comprises 602 residues: MRKHLNDLYKQIEKFPKTSGCYKMYSKDNKILYIGKAKNLRSRVKNYFSKRTSHKTKILMNNVTNIEIITTNSEYEALLLECNLIKKYKPTYNIKLKDDKGYPMIRITCEKYPRIFKTRKIINDGSEYFGPYVNVKNLDLVLDLINKTFKTKKCKKKSKNPCLYFHMGQCLGVCYREDLEDEYRKEIEQIKHILNGNISKLLNDIEIKMKEVIMKENFEAAIKLKETKKSLIEISQTQIITKIDKLSEDYLYIHKTNSLNTIVILKYKDGKLTEKDIHFDESIYEEDELIEKFITQYYTSPNMIVPDKIHIFKKIDTSNITKLINELKNIKTEIIYKETKDNIKIIEMATSNAKLALITYNHEKNKAIENLKTILEMKKLPKTIEGFDIAHINGYKTVASLVTFKMGKPFKDGYRVYKINSLSNGEIDDCKAIKEVISRRYSKLINEQLKLPDLILIDGGKGQLNSAYSILKGLRIEEKIAICALAKKEEIIFLPNKNQGIKLQKRNSALQVLQNVRDEAHRRANNFNNKLHNNIKLNYTKIKGIGEQKAKKILKVLGTYKDILLLNEDEIATKMKINITMANKIKKFAEEQNLNNKQNNHI.

In terms of domain architecture, GIY-YIG spans 17 to 94 (KTSGCYKMYS…IKKYKPTYNI (78 aa)). The UVR domain occupies 199–234 (SKLLNDIEIKMKEVIMKENFEAAIKLKETKKSLIEI).

This sequence belongs to the UvrC family. In terms of assembly, interacts with UvrB in an incision complex.

Its subcellular location is the cytoplasm. The UvrABC repair system catalyzes the recognition and processing of DNA lesions. UvrC both incises the 5' and 3' sides of the lesion. The N-terminal half is responsible for the 3' incision and the C-terminal half is responsible for the 5' incision. The chain is UvrABC system protein C from Borrelia recurrentis (strain A1).